Reading from the N-terminus, the 386-residue chain is uncharacterized protein (386 aa).

The next 12 helical transmembrane spans lie at 8-28, 43-63, 79-99, 102-122, 134-154, 156-176, 216-236, 241-261, 272-292, 297-317, 342-362, and 365-385; these read VFVI…IAPI, IGLI…PVGV, FFYG…GFLI, IFTG…IAAI, IFNS…GILA, MYGI…AAII, FIIN…LALY, NITI…MALL, LGNI…YLLS, FLTI…SSTA, INIG…ILGI, and MYKF…LRIE.

This sequence belongs to the major facilitator superfamily.

It is found in the cell membrane. This is an uncharacterized protein from Methanocaldococcus jannaschii (strain ATCC 43067 / DSM 2661 / JAL-1 / JCM 10045 / NBRC 100440) (Methanococcus jannaschii).